A 395-amino-acid polypeptide reads, in one-letter code: Acid ceramidase (395 aa).

Residues 1–21 (MLGRSRLTFVLLAAAVTCAEA) form the signal peptide. The cysteines at positions 31 and 340 are disulfide-linked. The active-site Nucleophile is Cys143. Asn173, Asn259, Asn286, and Asn348 each carry an N-linked (GlcNAc...) asparagine glycan. The cysteines at positions 388 and 392 are disulfide-linked.

This sequence belongs to the acid ceramidase family. In terms of assembly, heterodimer; disulfide-linked. The heterodimer is composed of the disulfide-linked alpha and beta chains produced by autocatalytic cleavage of the precursor. In terms of processing, N-glycosylated. Post-translationally, proteolytically cleaved into two chains alpha and beta that remain associated via a disulfide bond. Cleavage gives rise to a conformation change that activates the enzyme. The same catalytic Cys residue mediates the autoproteolytic cleavage and subsequent hydrolysis of lipid substrates. The beta chain may undergo an additional C-terminal processing.

Its subcellular location is the lysosome. It is found in the secreted. The catalysed reaction is an N-acylsphing-4-enine + H2O = sphing-4-enine + a fatty acid. The enzyme catalyses N-dodecanoylsphing-4-enine + H2O = dodecanoate + sphing-4-enine. It carries out the reaction N-tetradecanoylsphing-4-enine + H2O = tetradecanoate + sphing-4-enine. It catalyses the reaction N-hexadecanoylsphing-4-enine + H2O = sphing-4-enine + hexadecanoate. The catalysed reaction is N-octadecanoylsphing-4-enine + H2O = sphing-4-enine + octadecanoate. The enzyme catalyses N-dodecanoyl-(4R)-hydroxysphinganine + H2O = (4R)-hydroxysphinganine + dodecanoate. It carries out the reaction N-(dodecanoyl)-sphinganine + H2O = dodecanoate + sphinganine. It catalyses the reaction N-(acetyl)-sphing-4-enine + H2O = sphing-4-enine + acetate. The catalysed reaction is N-(hexanoyl)sphing-4-enine + H2O = hexanoate + sphing-4-enine. The enzyme catalyses N-octanoylsphing-4-enine + H2O = octanoate + sphing-4-enine. It carries out the reaction N-(9Z-octadecenoyl)-sphing-4-enine + H2O = sphing-4-enine + (9Z)-octadecenoate. It catalyses the reaction N-dodecanoylethanolamine + H2O = dodecanoate + ethanolamine. Its pathway is lipid metabolism; sphingolipid metabolism. In terms of biological role, lysosomal ceramidase that hydrolyzes sphingolipid ceramides into sphingosine and free fatty acids at acidic pH. Ceramides, sphingosine, and its phosphorylated form sphingosine-1-phosphate are bioactive lipids that mediate cellular signaling pathways regulating several biological processes including cell proliferation, apoptosis and differentiation. Has a higher catalytic efficiency towards C12-ceramides versus other ceramides. Also catalyzes the reverse reaction allowing the synthesis of ceramides from fatty acids and sphingosine. For the reverse synthetic reaction, the natural sphingosine D-erythro isomer is more efficiently utilized as a substrate compared to D-erythro-dihydrosphingosine and D-erythro-phytosphingosine, while the fatty acids with chain lengths of 12 or 14 carbons are the most efficiently used. Also has an N-acylethanolamine hydrolase activity. By regulating the levels of ceramides, sphingosine and sphingosine-1-phosphate in the epidermis, mediates the calcium-induced differentiation of epidermal keratinocytes. Also indirectly regulates tumor necrosis factor/TNF-induced apoptosis. By regulating the intracellular balance between ceramides and sphingosine, in adrenocortical cells, probably also acts as a regulator of steroidogenesis. This is Acid ceramidase from Heterocephalus glaber (Naked mole rat).